We begin with the raw amino-acid sequence, 310 residues long: Homoserine O-acetyltransferase (310 aa).

Residue Cys142 is the Acyl-thioester intermediate of the active site. Substrate is bound by residues Lys163 and Ser192. Residue His235 is the Proton acceptor of the active site. Glu237 is a catalytic residue. Arg249 provides a ligand contact to substrate.

Belongs to the MetA family.

The protein localises to the cytoplasm. It catalyses the reaction L-homoserine + acetyl-CoA = O-acetyl-L-homoserine + CoA. It participates in amino-acid biosynthesis; L-methionine biosynthesis via de novo pathway; O-acetyl-L-homoserine from L-homoserine: step 1/1. Functionally, transfers an acetyl group from acetyl-CoA to L-homoserine, forming acetyl-L-homoserine. The polypeptide is Homoserine O-acetyltransferase (Lachnospira eligens (strain ATCC 27750 / DSM 3376 / VPI C15-48 / C15-B4) (Eubacterium eligens)).